A 49-amino-acid chain; its full sequence is Large ribosomal subunit protein bL33A (49 aa).

The protein belongs to the bacterial ribosomal protein bL33 family.

The chain is Large ribosomal subunit protein bL33A from Leuconostoc mesenteroides subsp. mesenteroides (strain ATCC 8293 / DSM 20343 / BCRC 11652 / CCM 1803 / JCM 6124 / NCDO 523 / NBRC 100496 / NCIMB 8023 / NCTC 12954 / NRRL B-1118 / 37Y).